We begin with the raw amino-acid sequence, 264 residues long: Apolipoprotein A-I (264 aa).

An N-terminal signal peptide occupies residues M1–A18. Repeat copies occupy residues L67–G88 and L89–S110. The segment at L67 to Q264 is 10 X approximate tandem repeats. The stretch at E111–Q121 is one 3; half-length repeat. 5 consecutive repeat copies span residues P122 to R143, P144 to T165, P166 to A187, P188 to S207, and A208 to K229. Residue M193 is modified to Methionine sulfoxide. The 9; half-length repeat unit spans residues P230–L240. Repeat unit 10 spans residues P241–Q264.

Belongs to the apolipoprotein A1/A4/E family. Homodimer. Interacts with APOA1BP and CLU. Component of a sperm activating protein complex (SPAP), consisting of APOA1, an immunoglobulin heavy chain, an immunoglobulin light chain and albumin. Interacts with NDRG1. Interacts with SCGB3A2. Interacts with NAXE and YJEFN3. Post-translationally, glycosylated. Palmitoylated. In terms of processing, phosphorylation sites are present in the extracellular medium.

Its subcellular location is the secreted. Its function is as follows. Participates in the reverse transport of cholesterol from tissues to the liver for excretion by promoting cholesterol efflux from tissues and by acting as a cofactor for the lecithin cholesterol acyltransferase (LCAT). As part of the SPAP complex, activates spermatozoa motility. The polypeptide is Apolipoprotein A-I (APOA1) (Cavia porcellus (Guinea pig)).